Here is a 166-residue protein sequence, read N- to C-terminus: Small ribosomal subunit protein uS5 (166 aa).

An S5 DRBM domain is found at 12-75 (YIEKLVQVNR…EAARRNMIQV (64 aa)).

Belongs to the universal ribosomal protein uS5 family. In terms of assembly, part of the 30S ribosomal subunit. Contacts proteins S4 and S8.

With S4 and S12 plays an important role in translational accuracy. Functionally, located at the back of the 30S subunit body where it stabilizes the conformation of the head with respect to the body. The chain is Small ribosomal subunit protein uS5 from Azotobacter vinelandii (strain DJ / ATCC BAA-1303).